A 494-amino-acid polypeptide reads, in one-letter code: Tripartite motif-containing protein 5 (494 aa).

Position 2 is an N-acetylalanine (Ala2). The segment at 15–59 (CPICLELLTEPLSLDCGHSFCQACITANHKESMLHQGERSCPLCR) adopts an RING-type zinc-finger fold. The B box-type zinc finger occupies 91 to 132 (QNVDHCARHGEKLLLFCEQDGNIICWLCERSQEHRGHNTFLV). Zn(2+)-binding residues include Cys96, His99, Cys118, and His124. A coiled-coil region spans residues 132–223 (VEEVAQKYRE…RLVQSENDMV (92 aa)). Residues 186-199 (FKQLRDILDCEESN) are required for interaction with GABARAP and for autophagy. The B30.2/SPRY domain occupies 280 to 494 (PDLKRMLQVL…LPMTLCSPRS (215 aa)).

The protein belongs to the TRIM/RBCC family. In terms of assembly, can form homodimers and homotrimers. In addition to lower-order dimerization, also exhibits a higher-order multimerization and both low- and high-order multimerizations are essential for its restriction activity. Interacts with BTBD1 and BTBD2. Interacts with PSMC4, PSMC5, PSMD7 and HSPA8/HSC70. Interacts (via B30.2/SPRY domain) with HSPA1A/B. Interacts with PSMC2, MAP3K7/TAK1, TAB2 and TAB3. Interacts with SQSTM1. Interacts with TRIM6 and TRIM34. Interacts with ULK1 (phosphorylated form), GABARAP, GABARAPL1, GABARAPL2, MAP1LC3A, MAP1LC3C and BECN1. Post-translationally, degraded in a proteasome-independent fashion in the absence of viral infection but in a proteasome-dependent fashion following exposure to restriction sensitive virus. Autoubiquitinated in a RING finger- and UBE2D2-dependent manner. Monoubiquitinated by TRIM21. Deubiquitinated by Yersinia YopJ. Ubiquitination may not lead to proteasomal degradation.

The protein resides in the cytoplasm. Its subcellular location is the nucleus. It catalyses the reaction S-ubiquitinyl-[E2 ubiquitin-conjugating enzyme]-L-cysteine + [acceptor protein]-L-lysine = [E2 ubiquitin-conjugating enzyme]-L-cysteine + N(6)-ubiquitinyl-[acceptor protein]-L-lysine.. It participates in protein modification; protein ubiquitination. Capsid-specific restriction factor that prevents infection from non-host-adapted retroviruses. Blocks viral replication early in the life cycle, after viral entry but before reverse transcription. In addition to acting as a capsid-specific restriction factor, also acts as a pattern recognition receptor that activates innate immune signaling in response to the retroviral capsid lattice. Binding to the viral capsid triggers its E3 ubiquitin ligase activity, and in concert with the heterodimeric ubiquitin conjugating enzyme complex UBE2V1-UBE2N (also known as UBC13-UEV1A complex) generates 'Lys-63'-linked polyubiquitin chains, which in turn are catalysts in the autophosphorylation of the MAP3K7/TAK1 complex (includes TAK1, TAB2, and TAB3). Activation of the MAP3K7/TAK1 complex by autophosphorylation results in the induction and expression of NF-kappa-B and MAPK-responsive inflammatory genes, thereby leading to an innate immune response in the infected cell. Restricts infection by simian immunodeficiency virus (SIV-mac). Plays a role in regulating autophagy through activation of autophagy regulator BECN1 by causing its dissociation from its inhibitors BCL2 and TAB2. The chain is Tripartite motif-containing protein 5 (TRIM5) from Saimiri sciureus (Common squirrel monkey).